Consider the following 440-residue polypeptide: MGDWSFLGNILEEVNEHSTVIGRVWLTVLFIFRILILGTAAEFVWGDEQSDFVCNTQQPGCENVCYDEAFPISHIRLWVLQIIFVSTPSLVYVGHAVHHVRMEEKRKEREAEELSQQSPGNGGERAPLAADQGSVKKSSSSSKGTKKFRLEGTLLRTYVCHIIFKTLFEVGFIVGHYFLYGFRILPLYRCSRWPCPNVVDCFVSRPTEKTIFILFMLSVASVSLFLNILEMSHLGLKKIRSAFKRPVEQPLGEIPEKSLHSIAVSSIQKAKGYQLLEEEKIVSHYFPLTEVGMVEASPLSAKPFSQFEEKVGPGPLGDLSRAYQETLPSYAQVGAQEGVEEEQPIEAAAEPEVGDKSQEAERVSTEGEETLAVLEEEKVEPPEVEKEAEKEETPPEKVSKQELTPEKAPSLCAELPGEDTRPLSRLSKASSRARSDDLTV.

An intramembrane segment occupies 2-12; the sequence is GDWSFLGNILE. Residues 13 to 21 lie on the Cytoplasmic side of the membrane; that stretch reads EVNEHSTVI. Residues 22–42 traverse the membrane as a helical segment; that stretch reads GRVWLTVLFIFRILILGTAAE. Topologically, residues 43-71 are extracellular; it reads FVWGDEQSDFVCNTQQPGCENVCYDEAFP. 3 cysteine pairs are disulfide-bonded: Cys54/Cys201, Cys61/Cys195, and Cys65/Cys190. The chain crosses the membrane as a helical span at residues 72 to 92; that stretch reads ISHIRLWVLQIIFVSTPSLVY. Residues 93–161 are Cytoplasmic-facing; the sequence is VGHAVHHVRM…GTLLRTYVCH (69 aa). The tract at residues 108-144 is disordered; it reads EREAEELSQQSPGNGGERAPLAADQGSVKKSSSSSKG. Residues 162–182 traverse the membrane as a helical segment; that stretch reads IIFKTLFEVGFIVGHYFLYGF. Over 183 to 210 the chain is Extracellular; sequence RILPLYRCSRWPCPNVVDCFVSRPTEKT. The chain crosses the membrane as a helical span at residues 211-231; sequence IFILFMLSVASVSLFLNILEM. The Cytoplasmic segment spans residues 232–440; that stretch reads SHLGLKKIRS…SRARSDDLTV (209 aa). The disordered stretch occupies residues 334–440; sequence GAQEGVEEEQ…SRARSDDLTV (107 aa). Basic and acidic residues-rich tracts occupy residues 353–365 and 375–405; these read VGDK…RVST and EEEK…ELTP. Positions 423–432 are enriched in low complexity; that stretch reads LSRLSKASSR.

This sequence belongs to the connexin family. Alpha-type (group II) subfamily. As to quaternary structure, a hemichannel or connexon is composed of a hexamer of connexins. A functional gap junction is formed by the apposition of two hemichannels. Forms heteromeric channels with GJA3. Detected in eye lens (at protein level). Eye lens.

The protein resides in the cell membrane. Its subcellular location is the cell junction. It localises to the gap junction. Structural component of eye lens gap junctions. Gap junctions are dodecameric channels that connect the cytoplasm of adjoining cells. They are formed by the docking of two hexameric hemichannels, one from each cell membrane. Small molecules and ions diffuse from one cell to a neighboring cell via the central pore. This Ovis aries (Sheep) protein is Gap junction alpha-8 protein (GJA8).